The chain runs to 444 residues: Endothelin-3 receptor (444 aa).

Positions 1-18 (MATVILFVAWMACLMVGV) are cleaved as a signal peptide. The Extracellular segment spans residues 19–88 (CYQEFQTQQN…SRAKIRHAFK (70 aa)). Asn60 carries an N-linked (GlcNAc...) asparagine glycan. A helical transmembrane segment spans residues 89 to 113 (YVTTILSCVIFLVGIVGNSTLLRII). Residues 114 to 124 (YKNKCMRNGPN) lie on the Cytoplasmic side of the membrane. Residues 125 to 145 (VLIASLALGDLFYILIAIPII) form a helical membrane-spanning segment. The Extracellular segment spans residues 146-161 (SISFWLSTGHSEYIYQ). Residues 162 to 180 (LVHLYRARVYSLSLCALSI) form a helical membrane-spanning segment. The Cytoplasmic segment spans residues 181–201 (DRYRAVASWNRIRSIGIPVRK). A helical transmembrane segment spans residues 202 to 226 (AIELTLIWAVAIIVAVPEAIAFNLV). Topologically, residues 227 to 254 (ELDFRGQTILVCMLPMEQTSDFMRFYQE) are extracellular. Residues 255–279 (VKVWWLFGFYFCLPLACTGVFYTLM) traverse the membrane as a helical segment. Residues 280–307 (SCEMLSIKNGMRIALNDHMKQRREVAKT) lie on the Cytoplasmic side of the membrane. Residues 308 to 328 (VFCLVVIFALCWLPLHVSSIF) traverse the membrane as a helical segment. Residues 329 to 365 (VRLSATVKRACILKNKRSCIMAEIQTGVNYQLLMVMN) lie on the Extracellular side of the membrane. Residues 366–386 (YTGINMASLNSCIGPVALYFV) form a helical membrane-spanning segment. Over 387 to 444 (SRKFKNCFQSCLCCWCHRPTLTITPMDEKGSGGKWKANGHDLDLDRSSSRLSNKYSSS) the chain is Cytoplasmic. Positions 416-444 (GSGGKWKANGHDLDLDRSSSRLSNKYSSS) are disordered. Residues 424–434 (NGHDLDLDRSS) show a composition bias toward basic and acidic residues. Positions 435 to 444 (SRLSNKYSSS) are enriched in low complexity.

This sequence belongs to the G-protein coupled receptor 1 family. Endothelin receptor subfamily.

It is found in the cell membrane. Receptor for endothelin-3. Mediates its action by association with G proteins that activate a phosphatidylinositol-calcium second messenger system. The sequence is that of Endothelin-3 receptor from Xenopus laevis (African clawed frog).